We begin with the raw amino-acid sequence, 240 residues long: Flagellar L-ring protein (240 aa).

The first 20 residues, 1-20, serve as a signal peptide directing secretion; that stretch reads MIRNFLLFFMPIYAILFLSG. The N-palmitoyl cysteine moiety is linked to residue cysteine 21. Residue cysteine 21 is the site of S-diacylglycerol cysteine attachment.

The protein belongs to the FlgH family. The basal body constitutes a major portion of the flagellar organelle and consists of four rings (L,P,S, and M) mounted on a central rod.

It localises to the cell outer membrane. The protein resides in the bacterial flagellum basal body. Its function is as follows. Assembles around the rod to form the L-ring and probably protects the motor/basal body from shearing forces during rotation. This chain is Flagellar L-ring protein, found in Sulfurimonas denitrificans (strain ATCC 33889 / DSM 1251) (Thiomicrospira denitrificans (strain ATCC 33889 / DSM 1251)).